The chain runs to 356 residues: 1,2-phenylacetyl-CoA epoxidase, subunit E (356 aa).

An FAD-binding FR-type domain is found at 2–106 (TTFHSLTVAK…MVPQGHFGYQ (105 aa)). The segment at 112–228 (QGRYLAIAAG…AAMMDDAETA (117 aa)) is oxidoreductase. Residues 262–354 (QKVTVRQDGR…DVVVDFDAKG (93 aa)) form the 2Fe-2S ferredoxin-type domain. Residues Cys-299, Cys-304, Cys-307, and Cys-337 each contribute to the [2Fe-2S] cluster site.

It in the N-terminal section; belongs to the FAD-binding oxidoreductase type 6 family. The cofactor is [2Fe-2S] cluster. It depends on FAD as a cofactor.

It participates in aromatic compound metabolism; phenylacetate degradation. Component of 1,2-phenylacetyl-CoA epoxidase multicomponent enzyme system which catalyzes the reduction of phenylacetyl-CoA (PA-CoA) to form 1,2-epoxyphenylacetyl-CoA. The subunit E is a reductase with a preference for NADPH and FAD, capable of reducing cytochrome c. This chain is 1,2-phenylacetyl-CoA epoxidase, subunit E (paaE), found in Escherichia coli (strain K12).